Here is a 93-residue protein sequence, read N- to C-terminus: UPF0298 protein GWCH70_0997 (93 aa).

This sequence belongs to the UPF0298 family.

It localises to the cytoplasm. The polypeptide is UPF0298 protein GWCH70_0997 (Geobacillus sp. (strain WCH70)).